Here is a 221-residue protein sequence, read N- to C-terminus: SIN3-HDAC complex-associated factor (221 aa).

Disordered regions lie at residues 110–153 (KLQK…ASSS) and 201–221 (AAAEKPEEQGPAPLPISTQEW). Positions 111–121 (LQKEFKRHNSD) are enriched in basic and acidic residues. Positions 124–135 (STTSSASPAQSP) are enriched in low complexity. Residues 136-153 (CYSNQSDEGSDTEMASSS) are compositionally biased toward polar residues.

The protein belongs to the SINHCAF family. Component of the Sin3/HDAC corepressor complex at least composed of BRMS1, BRMS1L, ING2, SAP30, SAP30L, HDAC1. Found in a complex composed of at least SINHCAF, SIN3A, HDAC1, SAP30, RBBP4, OGT and TET1. Interacts with SIN3A and OGT. In terms of tissue distribution, embryonic stem cells (at protein level).

The protein localises to the nucleus. Its function is as follows. Subunit of the Sin3 deacetylase complex (Sin3/HDAC), this subunit is important for the repression of genes encoding components of the TGF-beta signaling pathway. Core component of a SIN3A complex (composed of at least SINHCAF, SIN3A, HDAC1, SAP30, RBBP4, OGT and TET1) present in embryonic stem (ES) cells. Promotes the stability of SIN3A and its presence on chromatin and is essential for maintaining the potential of ES cells to proliferate rapidly, while ensuring a short G1-phase of the cell cycle, thereby preventing premature lineage priming. The sequence is that of SIN3-HDAC complex-associated factor (Sinhcaf) from Mus musculus (Mouse).